A 63-amino-acid chain; its full sequence is Large ribosomal subunit protein uL29 (63 aa).

It belongs to the universal ribosomal protein uL29 family.

The chain is Large ribosomal subunit protein uL29 from Shewanella oneidensis (strain ATCC 700550 / JCM 31522 / CIP 106686 / LMG 19005 / NCIMB 14063 / MR-1).